A 191-amino-acid polypeptide reads, in one-letter code: Molybdenum cofactor guanylyltransferase (191 aa).

GTP-binding positions include 11-13, Lys23, Asp66, and Asp97; that span reads LCG. Position 97 (Asp97) interacts with Mg(2+).

The protein belongs to the MobA family. Monomer. Requires Mg(2+) as cofactor.

Its subcellular location is the cytoplasm. It carries out the reaction Mo-molybdopterin + GTP + H(+) = Mo-molybdopterin guanine dinucleotide + diphosphate. In terms of biological role, transfers a GMP moiety from GTP to Mo-molybdopterin (Mo-MPT) cofactor (Moco or molybdenum cofactor) to form Mo-molybdopterin guanine dinucleotide (Mo-MGD) cofactor. This chain is Molybdenum cofactor guanylyltransferase, found in Campylobacter jejuni subsp. jejuni serotype O:2 (strain ATCC 700819 / NCTC 11168).